The chain runs to 156 residues: Ribosomal RNA large subunit methyltransferase H (156 aa).

S-adenosyl-L-methionine contacts are provided by residues leucine 73, glycine 104, and 123–128; that span reads LSPLTL.

It belongs to the RNA methyltransferase RlmH family. As to quaternary structure, homodimer.

Its subcellular location is the cytoplasm. The enzyme catalyses pseudouridine(1915) in 23S rRNA + S-adenosyl-L-methionine = N(3)-methylpseudouridine(1915) in 23S rRNA + S-adenosyl-L-homocysteine + H(+). Functionally, specifically methylates the pseudouridine at position 1915 (m3Psi1915) in 23S rRNA. This chain is Ribosomal RNA large subunit methyltransferase H, found in Pseudoalteromonas atlantica (strain T6c / ATCC BAA-1087).